The primary structure comprises 551 residues: MASQATTLRGYNIRKRDNVFEPKSSENLNSLNQSEEEGHIGRWPPLGYEAVSAEQKSAVQLRESQAGASISNNMNFKANDKSFSTSTAGRMSPDTNSLHHILPKNQVKNNGQTMDANCNNNVSNDANVPVCKNCLTSTTPLWRRDEHGAMLCNACGLFLKLHGKPRPISLKTDVIKSRNRKSNTNHAHNLDNFRNQTLIAELKGDCNIESSGRKANRVTSEDKKKKSSQLLMGTSSTAKISKKPKTESKERSDSHLSATKLEVLMSGDCSRPNLKPKLPKQDTAIYQEKLLTFPSYTDVKEYSNSAHQSAFIKERSQFNAASFPLNASHSVTSKTGADSPQLPHLSMLLGSLSSTSISNNGSEIVSNCNNGIASTAATLAPTSSRTTDSNPSEVPNQIRSTMSSPDIISAKRNDPAPLSFHMASINDMLETRDRAISNVKTETTPPHFIPFLQSSKAPCISKANSQSISNSVSSSDVSGRKFENHPAKDLGDQLSTKLHKEEEIIKLKTRINELELVTDLYRRHINELDGKCRALEERLQRTVKQEGNKGG.

The disordered stretch occupies residues 17–43 (DNVFEPKSSENLNSLNQSEEEGHIGRW). The segment at 131 to 155 (CKNCLTSTTPLWRRDEHGAMLCNAC) adopts a GATA-type zinc-finger fold. Disordered regions lie at residues 212-260 (GRKA…SATK), 379-400 (LAPTSSRTTDSNPSEVPNQIRS), and 467-490 (SISNSVSSSDVSGRKFENHPAKDL). Residues 228–239 (SQLLMGTSSTAK) are compositionally biased toward polar residues. A compositionally biased stretch (basic and acidic residues) spans 244-254 (PKTESKERSDS). The span at 388–400 (DSNPSEVPNQIRS) shows a compositional bias: polar residues. Residues 467 to 477 (SISNSVSSSDV) are compositionally biased toward low complexity. Basic and acidic residues predominate over residues 478–490 (SGRKFENHPAKDL).

The protein resides in the nucleus. In Saccharomyces cerevisiae (strain ATCC 204508 / S288c) (Baker's yeast), this protein is Protein GZF3 (GZF3).